A 308-amino-acid polypeptide reads, in one-letter code: Glutaminase (308 aa).

Substrate-binding residues include Ser66, Asn117, Glu161, Asn168, Tyr192, Tyr244, and Val262.

The protein belongs to the glutaminase family. In terms of assembly, homotetramer.

It carries out the reaction L-glutamine + H2O = L-glutamate + NH4(+). The chain is Glutaminase from Salmonella agona (strain SL483).